The primary structure comprises 453 residues: uncharacterized protein (453 aa).

It to yeast RIT1.

This is an uncharacterized protein from Schizosaccharomyces pombe (strain 972 / ATCC 24843) (Fission yeast).